Consider the following 766-residue polypeptide: Subtilisin-like protease SBT3.13 (766 aa).

Positions 1–21 are cleaved as a signal peptide; the sequence is MNNSLQSSKLVLLLAIALVLF. Residues 22–120 constitute a propeptide, activation peptide; the sequence is LNTELDFLTA…VIPNRIRKLK (99 aa). Residues 41-119 form the Inhibitor I9 domain; sequence VYIVYLGERE…HVIPNRIRKL (79 aa). The region spanning 134-618 is the Peptidase S8 domain; that stretch reads PTSFSSLSSV…GGLVNPEKAA (485 aa). Asp-162 functions as the Charge relay system in the catalytic mechanism. 2 N-linked (GlcNAc...) asparagine glycosylation sites follow: Asn-195 and Asn-223. His-239 acts as the Charge relay system in catalysis. 2 N-linked (GlcNAc...) asparagine glycosylation sites follow: Asn-254 and Asn-389. The Charge relay system role is filled by Ser-549. An N-linked (GlcNAc...) asparagine glycan is attached at Asn-641.

It belongs to the peptidase S8 family.

It is found in the secreted. This Arabidopsis thaliana (Mouse-ear cress) protein is Subtilisin-like protease SBT3.13.